The primary structure comprises 273 residues: Formamidopyrimidine-DNA glycosylase (273 aa).

Residue proline 2 is the Schiff-base intermediate with DNA of the active site. The Proton donor role is filled by glutamate 3. The active-site Proton donor; for beta-elimination activity is the lysine 58. Residues histidine 91, arginine 109, and arginine 154 each coordinate DNA. The segment at 239 to 273 adopts an FPG-type zinc-finger fold; sequence FVYARTGEPCRICNAPVRQIVQGQRSTFYCPNCQK. Arginine 263 (proton donor; for delta-elimination activity) is an active-site residue.

This sequence belongs to the FPG family. As to quaternary structure, monomer. The cofactor is Zn(2+).

It carries out the reaction Hydrolysis of DNA containing ring-opened 7-methylguanine residues, releasing 2,6-diamino-4-hydroxy-5-(N-methyl)formamidopyrimidine.. The enzyme catalyses 2'-deoxyribonucleotide-(2'-deoxyribose 5'-phosphate)-2'-deoxyribonucleotide-DNA = a 3'-end 2'-deoxyribonucleotide-(2,3-dehydro-2,3-deoxyribose 5'-phosphate)-DNA + a 5'-end 5'-phospho-2'-deoxyribonucleoside-DNA + H(+). Involved in base excision repair of DNA damaged by oxidation or by mutagenic agents. Acts as a DNA glycosylase that recognizes and removes damaged bases. Has a preference for oxidized purines, such as 7,8-dihydro-8-oxoguanine (8-oxoG). Has AP (apurinic/apyrimidinic) lyase activity and introduces nicks in the DNA strand. Cleaves the DNA backbone by beta-delta elimination to generate a single-strand break at the site of the removed base with both 3'- and 5'-phosphates. This is Formamidopyrimidine-DNA glycosylase from Herminiimonas arsenicoxydans.